Reading from the N-terminus, the 715-residue chain is DNA ligase (715 aa).

Residues 47–51, 96–97, and Glu129 each bind NAD(+); these read DADYD and SL. Lys131 functions as the N6-AMP-lysine intermediate in the catalytic mechanism. 4 residues coordinate NAD(+): Arg152, Glu189, Lys306, and Lys330. Zn(2+) is bound by residues Cys435, Cys438, Cys453, and Cys459. Residues 637-715 enclose the BRCT domain; the sequence is KRDSAVAGKT…EDEWLALIQG (79 aa).

This sequence belongs to the NAD-dependent DNA ligase family. LigA subfamily. Requires Mg(2+) as cofactor. Mn(2+) is required as a cofactor.

The catalysed reaction is NAD(+) + (deoxyribonucleotide)n-3'-hydroxyl + 5'-phospho-(deoxyribonucleotide)m = (deoxyribonucleotide)n+m + AMP + beta-nicotinamide D-nucleotide.. Functionally, DNA ligase that catalyzes the formation of phosphodiester linkages between 5'-phosphoryl and 3'-hydroxyl groups in double-stranded DNA using NAD as a coenzyme and as the energy source for the reaction. It is essential for DNA replication and repair of damaged DNA. The polypeptide is DNA ligase (Rhodopseudomonas palustris (strain BisA53)).